The sequence spans 227 residues: Cytochrome c oxidase subunit 2 (227 aa).

Residues 1–14 are Mitochondrial intermembrane-facing; the sequence is MAHPVQLGLQDATS. Residues 15-45 traverse the membrane as a helical segment; that stretch reads PVMEELITFHDQALMAMFLISFLILYALSST. Over 46-59 the chain is Mitochondrial matrix; the sequence is LTTKLTNTNITDAQ. A helical transmembrane segment spans residues 60 to 87; the sequence is EMETIWTILPAVILILIALPSLRILYMT. The Mitochondrial intermembrane portion of the chain corresponds to 88 to 227; sequence DEINNPSFTI…IFEMGPVFTL (140 aa). Cu cation is bound by residues His-161, Cys-196, Glu-198, Cys-200, His-204, and Met-207. Glu-198 contributes to the Mg(2+) binding site.

Belongs to the cytochrome c oxidase subunit 2 family. As to quaternary structure, component of the cytochrome c oxidase (complex IV, CIV), a multisubunit enzyme composed of 14 subunits. The complex is composed of a catalytic core of 3 subunits MT-CO1, MT-CO2 and MT-CO3, encoded in the mitochondrial DNA, and 11 supernumerary subunits COX4I, COX5A, COX5B, COX6A, COX6B, COX6C, COX7A, COX7B, COX7C, COX8 and NDUFA4, which are encoded in the nuclear genome. The complex exists as a monomer or a dimer and forms supercomplexes (SCs) in the inner mitochondrial membrane with NADH-ubiquinone oxidoreductase (complex I, CI) and ubiquinol-cytochrome c oxidoreductase (cytochrome b-c1 complex, complex III, CIII), resulting in different assemblies (supercomplex SCI(1)III(2)IV(1) and megacomplex MCI(2)III(2)IV(2)). Found in a complex with TMEM177, COA6, COX18, COX20, SCO1 and SCO2. Interacts with TMEM177 in a COX20-dependent manner. Interacts with COX20. Interacts with COX16. The cofactor is Cu cation.

It localises to the mitochondrion inner membrane. It catalyses the reaction 4 Fe(II)-[cytochrome c] + O2 + 8 H(+)(in) = 4 Fe(III)-[cytochrome c] + 2 H2O + 4 H(+)(out). Functionally, component of the cytochrome c oxidase, the last enzyme in the mitochondrial electron transport chain which drives oxidative phosphorylation. The respiratory chain contains 3 multisubunit complexes succinate dehydrogenase (complex II, CII), ubiquinol-cytochrome c oxidoreductase (cytochrome b-c1 complex, complex III, CIII) and cytochrome c oxidase (complex IV, CIV), that cooperate to transfer electrons derived from NADH and succinate to molecular oxygen, creating an electrochemical gradient over the inner membrane that drives transmembrane transport and the ATP synthase. Cytochrome c oxidase is the component of the respiratory chain that catalyzes the reduction of oxygen to water. Electrons originating from reduced cytochrome c in the intermembrane space (IMS) are transferred via the dinuclear copper A center (CU(A)) of subunit 2 and heme A of subunit 1 to the active site in subunit 1, a binuclear center (BNC) formed by heme A3 and copper B (CU(B)). The BNC reduces molecular oxygen to 2 water molecules using 4 electrons from cytochrome c in the IMS and 4 protons from the mitochondrial matrix. This is Cytochrome c oxidase subunit 2 (MT-CO2) from Papio anubis (Olive baboon).